Consider the following 249-residue polypeptide: Diaminopimelate epimerase (249 aa).

Substrate contacts are provided by Asn-11 and Asn-60. Catalysis depends on Cys-69, which acts as the Proton donor. Residues 70–71, Asn-164, and 182–183 each bind substrate; these read GN and ER. Cys-192 serves as the catalytic Proton acceptor. 193–194 lines the substrate pocket; it reads GT.

Belongs to the diaminopimelate epimerase family. Homodimer.

It localises to the cytoplasm. The catalysed reaction is (2S,6S)-2,6-diaminopimelate = meso-2,6-diaminopimelate. It functions in the pathway amino-acid biosynthesis; L-lysine biosynthesis via DAP pathway; DL-2,6-diaminopimelate from LL-2,6-diaminopimelate: step 1/1. Functionally, catalyzes the stereoinversion of LL-2,6-diaminopimelate (L,L-DAP) to meso-diaminopimelate (meso-DAP), a precursor of L-lysine and an essential component of the bacterial peptidoglycan. In Campylobacter jejuni subsp. jejuni serotype O:2 (strain ATCC 700819 / NCTC 11168), this protein is Diaminopimelate epimerase.